The chain runs to 1911 residues: Protein TIC 214 (1911 aa).

6 helical membrane-spanning segments follow: residues 41–61 (IINS…FSIG), 81–103 (ISAT…YAPL), 108–128 (GKPH…FFWN), 147–167 (FNIQ…HFIL), 195–215 (IGWL…LFWI), and 238–258 (IFSI…PLPI). Disordered regions lie at residues 265 to 299 (ETSE…STEE), 798 to 817 (DSEE…KEEN), and 1599 to 1647 (NQNQ…RKKK). The segment covering 268-297 (ETEESEENEEESDIEITSEPKEQDEEEGST) has biased composition (acidic residues). Basic and acidic residues-rich tracts occupy residues 1603 to 1615 (QEKK…RDLG) and 1623 to 1635 (QKQK…EKNY).

This sequence belongs to the TIC214 family. In terms of assembly, part of the Tic complex.

The protein localises to the plastid. The protein resides in the chloroplast inner membrane. Its function is as follows. Involved in protein precursor import into chloroplasts. May be part of an intermediate translocation complex acting as a protein-conducting channel at the inner envelope. This Lemna minor (Common duckweed) protein is Protein TIC 214.